Here is a 178-residue protein sequence, read N- to C-terminus: Large ribosomal subunit protein uL6 (178 aa).

The protein belongs to the universal ribosomal protein uL6 family. As to quaternary structure, part of the 50S ribosomal subunit.

Functionally, this protein binds to the 23S rRNA, and is important in its secondary structure. It is located near the subunit interface in the base of the L7/L12 stalk, and near the tRNA binding site of the peptidyltransferase center. The polypeptide is Large ribosomal subunit protein uL6 (Sulfurovum sp. (strain NBC37-1)).